The sequence spans 278 residues: Elongation factor Ts (278 aa).

Residues 79–82 are involved in Mg(2+) ion dislocation from EF-Tu; it reads TDFV.

It belongs to the EF-Ts family.

It localises to the cytoplasm. Associates with the EF-Tu.GDP complex and induces the exchange of GDP to GTP. It remains bound to the aminoacyl-tRNA.EF-Tu.GTP complex up to the GTP hydrolysis stage on the ribosome. In Borrelia hermsii (strain HS1 / DAH), this protein is Elongation factor Ts.